The primary structure comprises 475 residues: MNLETIIGLEVHVELKTNSKIFSASPTEFGAEPNTQTSVIDLGYPGVLPTLNKEAVNFAMKAAMALNCEIATETKFDRKNYFYPDNPKAYQISQFDKPIGENGWIEIEVDGKKKRIGITRLHLEEDAGKSTHTADGSLVDYNRQGMPLIEIVSEPDMRTPEEAYAYLEKLKSIIQYTGVSDCKMEEGSLRCDANISLRPVGQEKFGTKAELKNLNSFTYVQKGLEHEQVRQEKELLSGGIIQQETRRYDEATKKTILMRVKEGSDDYRYFPEPDLVELYIDDAWKEEVRASIPELPDARKARYVAELGLPAYDAHVLTLTKEMSDFFEATVADGADAKLTSNWLMGEVLAYLNKQQKELKDVALTPAGLSKMVQLIEKGTISSKIAKKVFNELIEKGGDPEEIVKAKGLVQISDEGTLRKVVTEILDNNEQSIEDFKNGKDRAIGFLVGQIMKATKGQANPPLVNKILLEEINKR.

It belongs to the GatB/GatE family. GatB subfamily. As to quaternary structure, heterotrimer of A, B and C subunits.

The catalysed reaction is L-glutamyl-tRNA(Gln) + L-glutamine + ATP + H2O = L-glutaminyl-tRNA(Gln) + L-glutamate + ADP + phosphate + H(+). It carries out the reaction L-aspartyl-tRNA(Asn) + L-glutamine + ATP + H2O = L-asparaginyl-tRNA(Asn) + L-glutamate + ADP + phosphate + 2 H(+). Functionally, allows the formation of correctly charged Asn-tRNA(Asn) or Gln-tRNA(Gln) through the transamidation of misacylated Asp-tRNA(Asn) or Glu-tRNA(Gln) in organisms which lack either or both of asparaginyl-tRNA or glutaminyl-tRNA synthetases. The reaction takes place in the presence of glutamine and ATP through an activated phospho-Asp-tRNA(Asn) or phospho-Glu-tRNA(Gln). In Bacillus thuringiensis subsp. konkukian (strain 97-27), this protein is Aspartyl/glutamyl-tRNA(Asn/Gln) amidotransferase subunit B.